A 399-amino-acid chain; its full sequence is Methylthioribose kinase (399 aa).

Residues Asn40, Lys57, and 111–113 (EDL) each bind ATP. Asp229 contacts substrate. 246–248 (DAE) lines the ATP pocket. A substrate-binding site is contributed by Arg344.

It belongs to the methylthioribose kinase family. In terms of assembly, homodimer.

It carries out the reaction 5-(methylsulfanyl)-D-ribose + ATP = 5-(methylsulfanyl)-alpha-D-ribose 1-phosphate + ADP + H(+). It functions in the pathway amino-acid biosynthesis; L-methionine biosynthesis via salvage pathway; S-methyl-5-thio-alpha-D-ribose 1-phosphate from S-methyl-5'-thioadenosine (hydrolase route): step 2/2. In terms of biological role, catalyzes the phosphorylation of methylthioribose into methylthioribose-1-phosphate. The chain is Methylthioribose kinase from Citrobacter koseri (strain ATCC BAA-895 / CDC 4225-83 / SGSC4696).